Consider the following 391-residue polypeptide: S-adenosylmethionine synthase (391 aa).

Histidine 14 lines the ATP pocket. Position 16 (aspartate 16) interacts with Mg(2+). Glutamate 42 is a K(+) binding site. Glutamate 55 and glutamine 98 together coordinate L-methionine. The flexible loop stretch occupies residues 98 to 108; it reads QSVDIAMGVDE. ATP is bound by residues 172–174, 238–239, aspartate 247, 253–254, alanine 270, and lysine 274; these read DGK, RF, and RK. Position 247 (aspartate 247) interacts with L-methionine. L-methionine is bound at residue lysine 278.

This sequence belongs to the AdoMet synthase family. In terms of assembly, homotetramer; dimer of dimers. Mg(2+) is required as a cofactor. Requires K(+) as cofactor.

The protein localises to the cytoplasm. The catalysed reaction is L-methionine + ATP + H2O = S-adenosyl-L-methionine + phosphate + diphosphate. Its pathway is amino-acid biosynthesis; S-adenosyl-L-methionine biosynthesis; S-adenosyl-L-methionine from L-methionine: step 1/1. Its function is as follows. Catalyzes the formation of S-adenosylmethionine (AdoMet) from methionine and ATP. The overall synthetic reaction is composed of two sequential steps, AdoMet formation and the subsequent tripolyphosphate hydrolysis which occurs prior to release of AdoMet from the enzyme. This is S-adenosylmethionine synthase from Clostridium botulinum (strain Langeland / NCTC 10281 / Type F).